The following is a 156-amino-acid chain: Cell division protein SepF (156 aa).

This sequence belongs to the SepF family. Homodimer. Interacts with FtsZ.

The protein localises to the cytoplasm. Cell division protein that is part of the divisome complex and is recruited early to the Z-ring. Probably stimulates Z-ring formation, perhaps through the cross-linking of FtsZ protofilaments. Its function overlaps with FtsA. The chain is Cell division protein SepF from Ruminiclostridium cellulolyticum (strain ATCC 35319 / DSM 5812 / JCM 6584 / H10) (Clostridium cellulolyticum).